Here is a 379-residue protein sequence, read N- to C-terminus: Mannitol-1-phosphate 5-dehydrogenase (379 aa).

3-14 (ALHFGAGNIGRG) lines the NAD(+) pocket.

This sequence belongs to the mannitol dehydrogenase family.

The catalysed reaction is D-mannitol 1-phosphate + NAD(+) = beta-D-fructose 6-phosphate + NADH + H(+). This is Mannitol-1-phosphate 5-dehydrogenase from Actinobacillus pleuropneumoniae serotype 5b (strain L20).